Reading from the N-terminus, the 250-residue chain is 3-deoxy-manno-octulosonate cytidylyltransferase (250 aa).

Belongs to the KdsB family.

It is found in the cytoplasm. It carries out the reaction 3-deoxy-alpha-D-manno-oct-2-ulosonate + CTP = CMP-3-deoxy-beta-D-manno-octulosonate + diphosphate. The protein operates within nucleotide-sugar biosynthesis; CMP-3-deoxy-D-manno-octulosonate biosynthesis; CMP-3-deoxy-D-manno-octulosonate from 3-deoxy-D-manno-octulosonate and CTP: step 1/1. It functions in the pathway bacterial outer membrane biogenesis; lipopolysaccharide biosynthesis. Activates KDO (a required 8-carbon sugar) for incorporation into bacterial lipopolysaccharide in Gram-negative bacteria. The polypeptide is 3-deoxy-manno-octulosonate cytidylyltransferase (Janthinobacterium sp. (strain Marseille) (Minibacterium massiliensis)).